The sequence spans 1085 residues: DNA repair and recombination protein RAD26 (1085 aa).

Ser-30 is subject to Phosphoserine. Disordered stretches follow at residues 118 to 141 (KEQVDQGAENKGSKEGLQRPGETE) and 190 to 219 (NLTDEDDNLSDQDYQMSGKESEDDEEEEND). Residues 128-141 (KGSKEGLQRPGETE) show a composition bias toward basic and acidic residues. Acidic residues predominate over residues 210-219 (SEDDEEEEND). The 210-residue stretch at 309–518 (YELYQQNCGG…WSLFDFIFPG (210 aa)) folds into the Helicase ATP-binding domain. Residue 322–329 (DEMGLGKT) coordinates ATP. The DEGH box signature appears at 469 to 472 (DEGH). The 164-residue stretch at 655–818 (VVKQLLLLWH…KRFFKIHELH (164 aa)) folds into the Helicase C-terminal domain.

The protein belongs to the SNF2/RAD54 helicase family.

The protein localises to the nucleus. The enzyme catalyses ATP + H2O = ADP + phosphate + H(+). Its function is as follows. May be involved in the preferential repair of active genes. In Saccharomyces cerevisiae (strain ATCC 204508 / S288c) (Baker's yeast), this protein is DNA repair and recombination protein RAD26 (RAD26).